Consider the following 354-residue polypeptide: UDP-3-O-acylglucosamine N-acyltransferase (354 aa).

H245 functions as the Proton acceptor in the catalytic mechanism.

It belongs to the transferase hexapeptide repeat family. LpxD subfamily. Homotrimer.

The catalysed reaction is a UDP-3-O-[(3R)-3-hydroxyacyl]-alpha-D-glucosamine + a (3R)-hydroxyacyl-[ACP] = a UDP-2-N,3-O-bis[(3R)-3-hydroxyacyl]-alpha-D-glucosamine + holo-[ACP] + H(+). Its pathway is bacterial outer membrane biogenesis; LPS lipid A biosynthesis. Catalyzes the N-acylation of UDP-3-O-acylglucosamine using 3-hydroxyacyl-ACP as the acyl donor. Is involved in the biosynthesis of lipid A, a phosphorylated glycolipid that anchors the lipopolysaccharide to the outer membrane of the cell. This chain is UDP-3-O-acylglucosamine N-acyltransferase, found in Anaeromyxobacter dehalogenans (strain 2CP-C).